The sequence spans 167 residues: MEEKTRKLKTLERLLIYDRLLRFALDLLTGIREELKADIDETRLIAESVLEEKEKKVVEDFILKIEELFLLKTDEVLDHIYDEYEVFNFDVTFLSAIPEEIERELERLALIDTVNTKLQLLIDILDEAFCLIPEENERIRVVLTPFRVYKELLEHAIDFNNKFKEKT.

Residues Leu28–Glu59 are a coiled coil.

This is an uncharacterized protein from Aquifex aeolicus (strain VF5).